A 572-amino-acid chain; its full sequence is Delta-1-pyrroline-5-carboxylate dehydrogenase, mitochondrial (572 aa).

Residue 300-305 participates in NAD(+) binding; the sequence is GQISTR. E320 functions as the Proton acceptor in the catalytic mechanism. C354 functions as the Nucleophile in the catalytic mechanism.

Belongs to the aldehyde dehydrogenase family.

Its subcellular location is the mitochondrion matrix. The enzyme catalyses L-glutamate 5-semialdehyde + NAD(+) + H2O = L-glutamate + NADH + 2 H(+). The protein operates within amino-acid degradation; L-proline degradation into L-glutamate; L-glutamate from L-proline: step 2/2. The polypeptide is Delta-1-pyrroline-5-carboxylate dehydrogenase, mitochondrial (prnC) (Emericella nidulans (strain FGSC A4 / ATCC 38163 / CBS 112.46 / NRRL 194 / M139) (Aspergillus nidulans)).